We begin with the raw amino-acid sequence, 40 residues long: SDGRNTAANDKASNLMALRDDCCPNPPCKASNPDLCDWRS.

The propeptide occupies S1–R19. 2 disulfides stabilise this stretch: C22-C28 and C23-C36. The tract at residues P24–P26 is lacks the Ser-Xaa-Pro motif that is crucial for potent interaction with nAChR.

The protein belongs to the conotoxin A superfamily. In terms of tissue distribution, expressed by the venom duct.

It is found in the secreted. Alpha-conotoxins act on postsynaptic membranes, they bind to the nicotinic acetylcholine receptors (nAChR) and thus inhibit them. Has possibly a distinct nAChR binding mode from other alpha-conotoxins, due to a different three residue motif (lacks the Ser-Xaa-Pro motif). The sequence is that of Alpha-conotoxin-like Qc1.1c from Conus quercinus (Oak cone).